A 446-amino-acid chain; its full sequence is Tetratricopeptide repeat protein 23 (446 aa).

TPR repeat units lie at residues L45–C78, V137–M170, A186–S219, T310–V347, and A356–L389. The interval A410 to D446 is disordered.

Associated with the EvC complex composed of EFCAB7, IQCE, EVC2 and EVC.

The protein resides in the cell projection. It localises to the cilium. Participates positively in the ciliary Hedgehog (Hh) signaling. This chain is Tetratricopeptide repeat protein 23 (TTC23), found in Bos taurus (Bovine).